A 134-amino-acid polypeptide reads, in one-letter code: uncharacterized protein (134 aa).

Transmembrane regions (helical) follow at residues 26–46 (VAVFLVRAVILLIFAAFGNIG), 55–75 (LLKFSIINIIMLLFGIAQIIV), and 101–121 (YAPMILLLAVNLCGAVFGLIL).

The protein resides in the membrane. This is an uncharacterized protein from Dictyostelium discoideum (Social amoeba).